Reading from the N-terminus, the 485-residue chain is NADH-quinone oxidoreductase subunit N (485 aa).

A run of 14 helical transmembrane segments spans residues 8-28 (LIAL…MLSI), 35-55 (FLNA…LWFV), 71-91 (GFAM…CTFA), 105-125 (FYLL…ANHL), 127-147 (ALFL…GYAF), 159-179 (YTIL…LVYA), 203-223 (LLAG…LVPF), 235-255 (PAPV…GVVM), 271-291 (VVLG…ALSQ), 297-317 (LLGY…IVLQ), 326-346 (VGVY…VVSL), 373-393 (AAVM…LGFI), 408-430 (WWLV…RVAV), and 455-475 (IVVL…QPLI).

It belongs to the complex I subunit 2 family. In terms of assembly, NDH-1 is composed of 13 different subunits. Subunits NuoA, H, J, K, L, M, N constitute the membrane sector of the complex.

The protein localises to the cell inner membrane. The enzyme catalyses a quinone + NADH + 5 H(+)(in) = a quinol + NAD(+) + 4 H(+)(out). Its function is as follows. NDH-1 shuttles electrons from NADH, via FMN and iron-sulfur (Fe-S) centers, to quinones in the respiratory chain. The immediate electron acceptor for the enzyme in this species is believed to be ubiquinone. Couples the redox reaction to proton translocation (for every two electrons transferred, four hydrogen ions are translocated across the cytoplasmic membrane), and thus conserves the redox energy in a proton gradient. In Salmonella choleraesuis (strain SC-B67), this protein is NADH-quinone oxidoreductase subunit N.